Reading from the N-terminus, the 96-residue chain is Interleukin-8 (96 aa).

The first 22 residues, M1 to A22, serve as a signal peptide directing secretion. Position 27 is a citrulline (R27). 2 disulfide bridges follow: C34-C61 and C36-C78.

The protein belongs to the intercrine alpha (chemokine CxC) family. As to quaternary structure, homodimer. Interacts with TNFAIP6 (via Link domain); this interaction interferes with chemokine binding to glycosaminoglycans. Post-translationally, citrullination at Arg-27 prevents proteolysis, and dampens tissue inflammation, it also enhances leukocytosis, possibly through impaired chemokine clearance from the blood circulation.

Its subcellular location is the secreted. Functionally, chemotactic factor that mediates inflammatory response by attracting neutrophils, basophils, and T-cells to clear pathogens and protect the host from infection. Also plays an important role in neutrophil activation. Released in response to an inflammatory stimulus, exerts its effect by binding to the G-protein-coupled receptors CXCR1 and CXCR2, primarily found in neutrophils, monocytes and endothelial cells. G-protein heterotrimer (alpha, beta, gamma subunits) constitutively binds to CXCR1/CXCR2 receptor and activation by IL8 leads to beta and gamma subunits release from Galpha (GNAI2 in neutrophils) and activation of several downstream signaling pathways including PI3K and MAPK pathways. The polypeptide is Interleukin-8 (CXCL8) (Dasypus novemcinctus (Nine-banded armadillo)).